Reading from the N-terminus, the 123-residue chain is MIQEQTMLDVADNSGARSVMCIKVLGGSHRRYAAIGDIIKVTVKEAIPRGKVKKGDVLKAVVVRTKKGVRRPDGSVIRFDGNACVILNNNTEQPIGTRIFGPVTRELRSEKFMKIISLAPEVL.

Belongs to the universal ribosomal protein uL14 family. In terms of assembly, part of the 50S ribosomal subunit. Forms a cluster with proteins L3 and L19. In the 70S ribosome, L14 and L19 interact and together make contacts with the 16S rRNA in bridges B5 and B8.

Functionally, binds to 23S rRNA. Forms part of two intersubunit bridges in the 70S ribosome. The sequence is that of Large ribosomal subunit protein uL14 from Actinobacillus pleuropneumoniae serotype 7 (strain AP76).